The sequence spans 831 residues: Probable glucan 1,3-beta-glucosidase D (831 aa).

Basic and acidic residues-rich tracts occupy residues 1-24 (MPSH…YREV), 44-56 (RRDD…RSHE), 79-93 (RSHD…RSRA), 102-115 (SRRD…EYRR), 137-151 (RDGQ…DREA), and 198-213 (QRER…MESK). Disordered stretches follow at residues 1-179 (MPSH…SGSH) and 192-241 (HYDE…GQSK). Residues 1-297 (MPSHSRSRDR…AQPPFWKRKK (297 aa)) are Cytoplasmic-facing. A helical; Signal-anchor for type II membrane protein membrane pass occupies residues 298-318 (WWIVIGVLVVVLAIVIPVAVV). Residues 319–831 (MSKKHGHDDD…PSFGDLPEYY (513 aa)) are Extracellular-facing. Residues Asn-376, Asn-381, Asn-393, Asn-410, Asn-442, Asn-546, and Asn-558 are each glycosylated (N-linked (GlcNAc...) asparagine). Residue Glu-597 is the Proton donor of the active site. Residues Asn-610, Asn-636, Asn-669, and Asn-689 are each glycosylated (N-linked (GlcNAc...) asparagine). Glu-702 functions as the Nucleophile in the catalytic mechanism.

The protein belongs to the glycosyl hydrolase 5 (cellulase A) family.

It is found in the cell membrane. It carries out the reaction Successive hydrolysis of beta-D-glucose units from the non-reducing ends of (1-&gt;3)-beta-D-glucans, releasing alpha-glucose.. Glucosidase involved in the degradation of cellulosic biomass. Active on lichenan. The chain is Probable glucan 1,3-beta-glucosidase D (exgD) from Aspergillus oryzae (strain ATCC 42149 / RIB 40) (Yellow koji mold).